Reading from the N-terminus, the 495-residue chain is tRNA(Ile)-lysidine synthase (495 aa).

An ATP-binding site is contributed by 26–31; it reads SGGSDS.

It belongs to the tRNA(Ile)-lysidine synthase family.

The protein localises to the cytoplasm. It carries out the reaction cytidine(34) in tRNA(Ile2) + L-lysine + ATP = lysidine(34) in tRNA(Ile2) + AMP + diphosphate + H(+). In terms of biological role, ligates lysine onto the cytidine present at position 34 of the AUA codon-specific tRNA(Ile) that contains the anticodon CAU, in an ATP-dependent manner. Cytidine is converted to lysidine, thus changing the amino acid specificity of the tRNA from methionine to isoleucine. The protein is tRNA(Ile)-lysidine synthase of Bartonella tribocorum (strain CIP 105476 / IBS 506).